The chain runs to 212 residues: High frequency lysogenization protein HflD homolog (212 aa).

This sequence belongs to the HflD family.

Its subcellular location is the cytoplasm. The protein localises to the cell inner membrane. This is High frequency lysogenization protein HflD homolog from Pectobacterium carotovorum subsp. carotovorum (strain PC1).